Reading from the N-terminus, the 1512-residue chain is Probable RNA-directed RNA polymerase (1512 aa).

It belongs to the totiviridae RNA-directed RNA polymerase family.

The enzyme catalyses RNA(n) + a ribonucleoside 5'-triphosphate = RNA(n+1) + diphosphate. Its function is as follows. RNA-dependent RNA polymerase which replicates the viral genome. Catalyzes the transcription of fully conservative plus-strand genomic RNAs that are extruded from the virion into the cytoplasm where they function as mRNAs for translation of viral proteins and also as substrates for encapsidation to form new virions. Once encapsidated, the positive strand is converted to dsRNA by the RNA-directed RNA polymerase. This Saccharomyces cerevisiae virus L-BC (ScV-L-BC) protein is Probable RNA-directed RNA polymerase (gag-pol).